An 877-amino-acid chain; its full sequence is Oligopeptide transporter 2 (877 aa).

At 1 to 167 (MSETVKDKVI…DPTIPVETFR (167 aa)) the chain is on the cytoplasmic side. A helical membrane pass occupies residues 168–188 (AYFLAIIWSVIGSGFNEFFSH). Position 189 (Arg-189) is a topological domain, extracellular. A helical membrane pass occupies residues 190 to 210 (VVSISLNTPIIQMFLYICGKA). Residues 211-240 (WAKTIPCWTITIRGRKYGINIDKPWTQKEQ) lie on the Cytoplasmic side of the membrane. Residues 241 to 261 (MFSTLLYAICQGAFYTHYNIL) form a helical membrane-spanning segment. At 262-272 (TQKLFYHSAFS) the chain is on the extracellular side. The chain crosses the membrane as a helical span at residues 273–293 (FGYQFLLSLSVQFIGFGFAGI). Residues 294–334 (LRKFVVYPARALWPTVMPTIAINKALLGKEKHESGMSRYKF) lie on the Cytoplasmic side of the membrane. The chain crosses the membrane as a helical span at residues 335–355 (FFLTFFIMFIYNWFPTYIINI). The Extracellular portion of the chain corresponds to 356–374 (LNTFNWMTWIKPSNINLAN). Asn-374 is a glycosylation site (N-linked (GlcNAc...) asparagine). Residues 375 to 395 (ITGGVTGLGINPISSFDWNVI) traverse the membrane as a helical segment. Over 396 to 404 (SFNSPLVYP) the chain is Cytoplasmic. Residues 405–425 (FWSYLTQYLGCILAALIVIAV) traverse the membrane as a helical segment. At 426–480 (YYSNYMSCQYLPIFTNSLYTNTGHSFKVTEVLDSDNKLDVKKYQSYSPPYYSAGN) the chain is on the extracellular side. The chain crosses the membrane as a helical span at residues 481–501 (LVSYGAFICAYPLMITWSFIV). Over 502–553 (HSKLLFNAFKDWALNLWAMRKLKSWVTMFKSDYRALDDYDDPHSNAMKNYKE) the chain is Cytoplasmic. Residues 554 to 574 (VPDWWYFAILIGSLVVGIAVV) traverse the membrane as a helical segment. At 575–582 (EHYPTNTP) the chain is on the extracellular side. A helical transmembrane segment spans residues 583 to 603 (VWGLFVCLGFNFVFLIPTTIL). The Cytoplasmic segment spans residues 604–614 (QATTGYSFGLN). The helical transmembrane segment at 615–635 (LLIEMVMGYALPGNPIAIMIL) threads the bilayer. Over 636–671 (KAFGYNIDGQADNYVSNLKIAHYCKIPPMALFRGQC) the chain is Extracellular. A helical membrane pass occupies residues 672 to 692 (VIVFIQIFVNLGVLNWQISNI). The Cytoplasmic segment spans residues 693–730 (KDFCTPHQNAKFTCPDAVTYYNASVVWGAIGPKRIFNY). Residues 731–751 (IYPIFKWCWLIGACIGIFFGV) form a helical membrane-spanning segment. At 752–766 (WKRWGKFYPRYFDPM) the chain is on the extracellular side. A helical transmembrane segment spans residues 767 to 789 (LFVGGMLNMSPPYNLMYYTSGMI). Over 790-811 (VSYISQYYMKRHHLNLWEKYNY) the chain is Cytoplasmic. Residues 812–832 (VLSAGFSTGLVLSAIIIFFAV) form a helical membrane-spanning segment. The Extracellular segment spans residues 833 to 877 (QYKDTAFNWWGNTVPYAGADGVGYPLKNITDTANGYFGYAPGHYP). Asn-860 is a glycosylation site (N-linked (GlcNAc...) asparagine).

Belongs to the oligopeptide OPT transporter family.

The protein resides in the membrane. Transports tetra- and pentapeptides. Does not transport glutathione. In Saccharomyces cerevisiae (strain ATCC 204508 / S288c) (Baker's yeast), this protein is Oligopeptide transporter 2 (OPT2).